Reading from the N-terminus, the 227-residue chain is NAD(P)H-quinone oxidoreductase subunit K, chloroplastic (227 aa).

Residues Cys43, Cys44, Cys108, and Cys139 each contribute to the [4Fe-4S] cluster site.

Belongs to the complex I 20 kDa subunit family. NDH is composed of at least 16 different subunits, 5 of which are encoded in the nucleus. The cofactor is [4Fe-4S] cluster.

The protein resides in the plastid. The protein localises to the chloroplast thylakoid membrane. The catalysed reaction is a plastoquinone + NADH + (n+1) H(+)(in) = a plastoquinol + NAD(+) + n H(+)(out). It carries out the reaction a plastoquinone + NADPH + (n+1) H(+)(in) = a plastoquinol + NADP(+) + n H(+)(out). Its function is as follows. NDH shuttles electrons from NAD(P)H:plastoquinone, via FMN and iron-sulfur (Fe-S) centers, to quinones in the photosynthetic chain and possibly in a chloroplast respiratory chain. The immediate electron acceptor for the enzyme in this species is believed to be plastoquinone. Couples the redox reaction to proton translocation, and thus conserves the redox energy in a proton gradient. This chain is NAD(P)H-quinone oxidoreductase subunit K, chloroplastic, found in Ranunculus macranthus (Large buttercup).